The following is a 749-amino-acid chain: Dynamin-1-like protein (749 aa).

Position 1 is an N-acetylmethionine (Met-1). In terms of domain architecture, Dynamin-type G spans 22–315 (IIQLPQIVVV…LMHHIRDCLP (294 aa)). Residues 32–39 (GTQSSGKS) form a G1 motif region. 32 to 40 (GTQSSGKSS) contributes to the GTP binding site. The segment at 58–60 (VTR) is G2 motif. Positions 74-93 (DKRKTTGEENDPATWKNSRH) are disordered. The segment at 159 to 162 (DLPG) is G3 motif. The segment at 228–231 (TKLD) is G4 motif. GTP is bound by residues 228 to 234 (TKLDLMD) and 259 to 262 (NRSQ). A G5 motif region spans residues 258 to 261 (VNRS). Residues 357–502 (YCNTIEGTAK…NEMVHNLVAI (146 aa)) form a middle domain region. The tract at residues 461–698 (NYSTQELLRF…NHVKDTLQSE (238 aa)) is interaction with GSK3B. Positions 515-582 (ADACGLMNNN…IQESRRETKN (68 aa)) are b domain. The disordered stretch occupies residues 536–604 (ELPSAVSRDK…QEPTTGNWRG (69 aa)). Ser-542 is subject to Phosphoserine. Glycyl lysine isopeptide (Lys-Gly) (interchain with G-Cter in SUMO) cross-links involve residues Lys-545 and Lys-548. The span at 550–567 (PSALAPASQEPSPAASAE) shows a compositional bias: low complexity. Ser-561 is subject to Phosphoserine. The span at 568–581 (ADGKLIQESRRETK) shows a compositional bias: basic and acidic residues. Glycyl lysine isopeptide (Lys-Gly) (interchain with G-Cter in SUMO) cross-links involve residues Lys-571 and Lys-581. O-linked (GlcNAc) threonine glycans are attached at residues Thr-598 and Thr-599. A Glycyl lysine isopeptide (Lys-Gly) (interchain with G-Cter in SUMO) cross-link involves residue Lys-607. Lys-610 carries the N6-acetyllysine; alternate modification. Lys-610 participates in a covalent cross-link: Glycyl lysine isopeptide (Lys-Gly) (interchain with G-Cter in SUMO); alternate. Residue Lys-619 forms a Glycyl lysine isopeptide (Lys-Gly) (interchain with G-Cter in SUMO) linkage. Ser-620 is subject to Phosphoserine. A Glycyl lysine isopeptide (Lys-Gly) (interchain with G-Cter in SUMO) cross-link involves residue Lys-621. A Phosphoserine; by CDK1 and PINK1 modification is found at Ser-629. Phosphoserine; by CAMK1 and PKA is present on Ser-650. Cys-657 is modified (S-nitrosocysteine). Residues 657-748 (CEVIERLIKS…IIAEIRETHL (92 aa)) form the GED domain. The important for homodimerization stretch occupies residues 667–681 (YFLIVRKNIQDSVPK).

It belongs to the TRAFAC class dynamin-like GTPase superfamily. Dynamin/Fzo/YdjA family. As to quaternary structure, homotetramer; dimerizes through the N-terminal GTP-middle region of one molecule binding to the GED domain of another DNM1L molecule. Oligomerizes in a GTP-dependent manner to form membrane-associated tubules with a spiral pattern. Interacts with GSK3B and MARCHF5. Interacts (via the GTPase and B domains) with UBE2I; the interaction promotes sumoylation of DNM1L, mainly in its B domain. Interacts with PPP3CA; the interaction dephosphorylates DNM1L and regulates its transition to mitochondria. Interacts with BCL2L1 isoform BCL-X(L) and CLTA; DNM1L and BCL2L1 isoform BCL-X(L) may form a complex in synaptic vesicles that also contains clathrin and MFF. Interacts with MFF; the interaction is inhinited by C11orf65/MFI. Interacts with FIS1. Interacts with MIEF2 and MIEF1; GTP-dependent, regulates GTP hydrolysis and DNM1L oligomerization. Interacts with PGAM5; this interaction leads to dephosphorylation at Ser-656 and activation of GTPase activity and eventually to mitochondria fragmentation. Interacts with RALBP1; during mitosis, recruits DNM1L to the mitochondrion and mediates its activation by the mitotic kinase cyclin B-CDK1. In terms of processing, phosphorylation/dephosphorylation events on two sites near the GED domain regulate mitochondrial fission. Phosphorylation on Ser-650 by CAMK1 and PKA inhibits the GTPase activity, leading to a defect in mitochondrial fission promoting mitochondrial elongation. Dephosphorylated on this site by PPP3CA which promotes mitochondrial fission. Phosphorylation on Ser-629 by CDK1 and PINK1 activates the GTPase activity and promotes mitochondrial fission. Phosphorylated in a circadian manner at Ser-650. Sumoylated on various lysine residues within the B domain, probably by MUL1. Sumoylation positively regulates mitochondrial fission. Desumoylated by SENP5 during G2/M transition of mitosis. Appears to be linked to its catalytic activity. Post-translationally, S-nitrosylation increases DNM1L dimerization, mitochondrial fission and causes neuronal damage. In terms of processing, O-GlcNAcylation augments the level of the GTP-bound active form of DNM1L and induces translocation from the cytoplasm to mitochondria in cardiomyocytes. It also decreases phosphorylation at Ser-650. Ubiquitination by MARCHF5 affects mitochondrial morphology.

It is found in the cytoplasm. The protein localises to the cytosol. It localises to the golgi apparatus. The protein resides in the endomembrane system. Its subcellular location is the mitochondrion outer membrane. It is found in the peroxisome. The protein localises to the membrane. It localises to the clathrin-coated pit. The protein resides in the cytoplasmic vesicle. Its subcellular location is the secretory vesicle. It is found in the synaptic vesicle membrane. The catalysed reaction is GTP + H2O = GDP + phosphate + H(+). Functionally, functions in mitochondrial and peroxisomal division. Mediates membrane fission through oligomerization into membrane-associated tubular structures that wrap around the scission site to constrict and sever the mitochondrial membrane through a GTP hydrolysis-dependent mechanism. The specific recruitment at scission sites is mediated by membrane receptors like MFF, MIEF1 and MIEF2 for mitochondrial membranes. While the recruitment by the membrane receptors is GTP-dependent, the following hydrolysis of GTP induces the dissociation from the receptors and allows DNM1L filaments to curl into closed rings that are probably sufficient to sever a double membrane. Acts downstream of PINK1 to promote mitochondrial fission in a PRKN-dependent manner. Plays an important role in mitochondrial fission during mitosis. Through its function in mitochondrial division, ensures the survival of at least some types of postmitotic neurons, including Purkinje cells, by suppressing oxidative damage. Required for normal brain development, including that of cerebellum. Facilitates developmentally regulated apoptosis during neural tube formation. Required for a normal rate of cytochrome c release and caspase activation during apoptosis; this requirement may depend upon the cell type and the physiological apoptotic cues. Required for formation of endocytic vesicles. Proposed to regulate synaptic vesicle membrane dynamics through association with BCL2L1 isoform Bcl-X(L) which stimulates its GTPase activity in synaptic vesicles; the function may require its recruitment by MFF to clathrin-containing vesicles. Required for programmed necrosis execution. Rhythmic control of its activity following phosphorylation at Ser-650 is essential for the circadian control of mitochondrial ATP production. The polypeptide is Dynamin-1-like protein (Bos taurus (Bovine)).